We begin with the raw amino-acid sequence, 549 residues long: Ribosomal protein S6 kinase-like 1 (549 aa).

Positions 87-115 (IHVDPNKERREAVKLKITKYLRRAEEIFN) constitute an MIT domain. Residues 145 to 539 (SAVEQLRGCR…VSKLKSHPFF (395 aa)) form the Protein kinase domain. ATP-binding positions include 151 to 159 (RGCRVVGVI) and K177. Residues 260 to 325 (LTPARLPSGH…SDLPKAPGGH (66 aa)) form a disordered region. The Proton acceptor role is filled by D412.

The protein belongs to the protein kinase superfamily. Ser/Thr protein kinase family. S6 kinase subfamily.

The catalysed reaction is L-seryl-[protein] + ATP = O-phospho-L-seryl-[protein] + ADP + H(+). It carries out the reaction L-threonyl-[protein] + ATP = O-phospho-L-threonyl-[protein] + ADP + H(+). In Pongo abelii (Sumatran orangutan), this protein is Ribosomal protein S6 kinase-like 1 (RPS6KL1).